Reading from the N-terminus, the 433-residue chain is E3 ubiquitin-protein ligase RGLG5 (433 aa).

Residues 1–61 (MGGSSSKESP…SYNSGRQTPK (61 aa)) are disordered. A lipid anchor (N-myristoyl glycine) is attached at G2. Residues 22–39 (SVSGSSSYSSAWDQSSYY) show a composition bias toward low complexity. Over residues 40-61 (QTPNHPSASPVSSYNSGRQTPK) the composition is skewed to polar residues. The 221-residue stretch at 93–313 (NLIVGIDVTK…KEAEFALSAL (221 aa)) folds into the VWFA domain. The disordered stretch occupies residues 340 to 383 (IALPPPTYATQSMRNSPRTSRSTSFQNKPYDNGVSSTPPSTTHN). Polar residues predominate over residues 347-383 (YATQSMRNSPRTSRSTSFQNKPYDNGVSSTPPSTTHN). An RING-type zinc finger spans residues 390-423 (CPVCLVSAKNMAFNCGHQTCAGCGEDLHVCPICR).

As to quaternary structure, interacts with PP2CA. Post-translationally, N-myristoylated.

Its subcellular location is the cell membrane. The catalysed reaction is S-ubiquitinyl-[E2 ubiquitin-conjugating enzyme]-L-cysteine + [acceptor protein]-L-lysine = [E2 ubiquitin-conjugating enzyme]-L-cysteine + N(6)-ubiquitinyl-[acceptor protein]-L-lysine.. Together with RGLG1, mediates the ubiquitination and subsequent proteasomal degradation of the target protein PP2CA. Functions as a positive regulator of abscisic acid (ABA) signaling through ABA-dependent degradation of PP2CA, a major inhibitor of ABA signaling. The chain is E3 ubiquitin-protein ligase RGLG5 from Arabidopsis thaliana (Mouse-ear cress).